We begin with the raw amino-acid sequence, 297 residues long: MQHIQDNDKLYRYLFQHRAVRGEWVRLNETFSQTLNTHQYPKAVQHLLGEMLVATSLLTAIMKFEGNITVQIQGDGPLKLAVVNGNEKQQLRALARVQAEIDDQASLAEMVGNGVLVISIIPTEGERYQGVIQLDKPTIRECLEDYFIRSEQLQTHLIIRVGEYAGQAVAAGMLLQIMPDGTGTPEDFEHLMTLAETVKDEELFGLTAEALLYRLFHQEQVEVYPAQTTAFKCGCSRERSGQAMLLLPMAEIEEMLAEKKGVIDMQCECCGTQYFFDKPAIMLLKEEAAKLADLGLT.

Cystine bridges form between Cys233–Cys235 and Cys267–Cys270.

It belongs to the HSP33 family. In terms of processing, under oxidizing conditions two disulfide bonds are formed involving the reactive cysteines. Under reducing conditions zinc is bound to the reactive cysteines and the protein is inactive.

The protein resides in the cytoplasm. In terms of biological role, redox regulated molecular chaperone. Protects both thermally unfolding and oxidatively damaged proteins from irreversible aggregation. Plays an important role in the bacterial defense system toward oxidative stress. The protein is 33 kDa chaperonin of Haemophilus ducreyi (strain 35000HP / ATCC 700724).